Reading from the N-terminus, the 286-residue chain is Probable aquaporin PIP2-5 (286 aa).

N-acetylmethionine is present on Met1. The segment covering 1 to 18 (MTKEVVGDKRSFSGKDYQ) has biased composition (basic and acidic residues). The tract at residues 1-23 (MTKEVVGDKRSFSGKDYQDPPPE) is disordered. The Cytoplasmic segment spans residues 1 to 38 (MTKEVVGDKRSFSGKDYQDPPPEPLFDATELGKWSFYR). N6,N6-dimethyllysine is present on Lys3. The helical transmembrane segment at 39-59 (ALIAEFIATLLFLYVTIMTVI) threads the bilayer. The Extracellular portion of the chain corresponds to 60–75 (GYKSQTDPALNPDQCT). A helical membrane pass occupies residues 76 to 96 (GVGVLGIAWAFGGMIFILVYC). Over 97–124 (TAGISGGHINPAVTFGLLLARKVTLVRA) the chain is Cytoplasmic. The short motif at 106–108 (NPA) is the NPA 1 element. Residues 125 to 145 (VMYMVAQCLGAICGVALVKAF) form a helical membrane-spanning segment. Residues 146–165 (QSAYFTRYGGGANGLSDGYS) lie on the Extracellular side of the membrane. The chain crosses the membrane as a helical span at residues 166 to 186 (IGTGVAAEIIGTFVLVYTVFS). The Cytoplasmic portion of the chain corresponds to 187–200 (ATDPKRSARDSHVP). The helical transmembrane segment at 201–221 (VLAPLPIGFAVFIVHLATIPI) threads the bilayer. Topologically, residues 222 to 248 (TGTGINPARSLGAAIIYNKDKAWDHHW) are extracellular. An NPA 2 motif is present at residues 227–229 (NPA). Residues 249 to 269 (IFWVGPFAGAAIAAFYHQFVL) traverse the membrane as a helical segment. The Cytoplasmic segment spans residues 270-286 (RAGAIKALGSFRSQPHV). Phosphoserine occurs at positions 279 and 282.

This sequence belongs to the MIP/aquaporin (TC 1.A.8) family. PIP (TC 1.A.8.11) subfamily. As to expression, expressed in green siliques.

The protein resides in the cell membrane. Aquaporins facilitate the transport of water and small neutral solutes across cell membranes. This chain is Probable aquaporin PIP2-5 (PIP2-5), found in Arabidopsis thaliana (Mouse-ear cress).